Reading from the N-terminus, the 254-residue chain is UPF0246 protein FTH_1656 (254 aa).

It belongs to the UPF0246 family.

The chain is UPF0246 protein FTH_1656 from Francisella tularensis subsp. holarctica (strain OSU18).